The following is a 360-amino-acid chain: Squamosa promoter-binding-like protein 7 (360 aa).

The segment covering 74-89 (AQGSGGGGGGGGGGSA) has biased composition (gly residues). The segment at 74 to 98 (AQGSGGGGGGGGGGSADQGKRKEKA) is disordered. The SBP-type zinc-finger motif lies at 105–182 (VPRCQVEGCD…AGHNERRRRS (78 aa)). Positions 108, 113, 130, 133, 149, 152, 156, and 168 each coordinate Zn(2+). The Bipartite nuclear localization signal signature appears at 165–181 (KKSCRRRLAGHNERRRR). The segment covering 172–182 (LAGHNERRRRS) has biased composition (basic residues). 3 disordered regions span residues 172–196 (LAGH…AHPH), 261–306 (FFSD…HENQ), and 318–360 (TTAA…ARVV).

In terms of tissue distribution, expressed in young panicles.

It localises to the nucleus. In terms of biological role, trans-acting factor that binds specifically to the consensus nucleotide sequence 5'-TNCGTACAA-3'. May be involved in panicle development. This chain is Squamosa promoter-binding-like protein 7 (SPL7), found in Oryza sativa subsp. japonica (Rice).